Consider the following 292-residue polypeptide: ATP synthase subunit a (292 aa).

7 helical membrane-spanning segments follow: residues 39–59 (QILG…FYKL), 73–93 (FLLL…DLLG), 102–122 (YFLM…LGGI), 128–148 (SLTF…VMGI), 172–192 (TFIP…SISL), 196–216 (GNIL…IFIF), and 231–251 (VFAG…AGVL).

It belongs to the ATPase A chain family. In terms of assembly, F-type ATPases have 2 components, CF(1) - the catalytic core - and CF(0) - the membrane proton channel. CF(1) has five subunits: alpha(3), beta(3), gamma(1), delta(1), epsilon(1). CF(0) has three main subunits: a(1), b(2) and c(9-12). The alpha and beta chains form an alternating ring which encloses part of the gamma chain. CF(1) is attached to CF(0) by a central stalk formed by the gamma and epsilon chains, while a peripheral stalk is formed by the delta and b chains.

The protein localises to the cell membrane. Functionally, key component of the proton channel; it plays a direct role in the translocation of protons across the membrane. In Mycoplasma genitalium (strain ATCC 33530 / DSM 19775 / NCTC 10195 / G37) (Mycoplasmoides genitalium), this protein is ATP synthase subunit a.